Consider the following 60-residue polypeptide: Large ribosomal subunit protein bL32 (60 aa).

Over residues 1 to 19 (MAVPKRRTSKRRKRARNTH) the composition is skewed to basic residues. The disordered stretch occupies residues 1 to 20 (MAVPKRRTSKRRKRARNTHK).

It belongs to the bacterial ribosomal protein bL32 family.

This chain is Large ribosomal subunit protein bL32, found in Gemmatimonas aurantiaca (strain DSM 14586 / JCM 11422 / NBRC 100505 / T-27).